Here is a 198-residue protein sequence, read N- to C-terminus: Putative pseudouridine methyltransferase (198 aa).

Positions 132 and 186 each coordinate S-adenosyl-L-methionine.

This sequence belongs to the methyltransferase superfamily. TrmY family.

Its subcellular location is the cytoplasm. In Photobacterium profundum (strain SS9), this protein is Putative pseudouridine methyltransferase.